The sequence spans 117 residues: NADPH-dependent 7-cyano-7-deazaguanine reductase (117 aa).

Catalysis depends on C31, which acts as the Thioimide intermediate. The active-site Proton donor is the D38. Substrate is bound by residues 53 to 55 and 72 to 73; these read IEL and YE.

This sequence belongs to the GTP cyclohydrolase I family. QueF type 1 subfamily.

It localises to the cytoplasm. It catalyses the reaction 7-aminomethyl-7-carbaguanine + 2 NADP(+) = 7-cyano-7-deazaguanine + 2 NADPH + 3 H(+). Its pathway is tRNA modification; tRNA-queuosine biosynthesis. In terms of biological role, catalyzes the NADPH-dependent reduction of 7-cyano-7-deazaguanine (preQ0) to 7-aminomethyl-7-deazaguanine (preQ1). This is NADPH-dependent 7-cyano-7-deazaguanine reductase from Chlorobaculum tepidum (strain ATCC 49652 / DSM 12025 / NBRC 103806 / TLS) (Chlorobium tepidum).